The following is a 1097-amino-acid chain: DNA-directed RNA polymerase subunit beta (1097 aa).

The interval 1072-1097 (QDVNPRRSTPSRPTYESLGVADYDED) is disordered.

This sequence belongs to the RNA polymerase beta chain family. In terms of assembly, in cyanobacteria the RNAP catalytic core is composed of 2 alpha, 1 beta, 1 beta', 1 gamma and 1 omega subunit. When a sigma factor is associated with the core the holoenzyme is formed, which can initiate transcription.

The enzyme catalyses RNA(n) + a ribonucleoside 5'-triphosphate = RNA(n+1) + diphosphate. Its function is as follows. DNA-dependent RNA polymerase catalyzes the transcription of DNA into RNA using the four ribonucleoside triphosphates as substrates. The protein is DNA-directed RNA polymerase subunit beta of Prochlorococcus marinus (strain MIT 9303).